The primary structure comprises 134 residues: Beta-synuclein (134 aa).

A run of 2 repeats spans residues 20–30 (EKTKQGVTEAA) and 31–41 (EKTKEGVLYVG). Residues 20–67 (EKTKQGVTEAAEKTKEGVLYVGSKTREGVVQGVASVAEKTKEQASHLG) are 4 X 11 AA tandem repeats of [EGS]-K-T-K-[EQ]-[GQ]-V-X(4). The 3; approximate repeat unit spans residues 42 to 56 (SKTREGVVQGVASVA). Copy 4 of the repeat occupies 57-67 (EKTKEQASHLG). Positions 89–134 (FPTDLKPEEVAQEAAEEPLIEPLMEPEGESYEDPPQEEYQEYEPEA) are disordered. Positions 98–134 (VAQEAAEEPLIEPLMEPEGESYEDPPQEEYQEYEPEA) are enriched in acidic residues. Ser118 is modified (phosphoserine; by BARK1, CK2 and GRK5).

Belongs to the synuclein family. In terms of processing, phosphorylated. Phosphorylation by G-protein coupled receptor kinases (GRK) is more efficient than phosphorylation by CK1, CK2 and CaM-kinase II. As to expression, expressed predominantly in brain; concentrated in presynaptic nerve terminals.

Its subcellular location is the cytoplasm. Its function is as follows. Non-amyloid component of senile plaques found in Alzheimer disease. Could act as a regulator of SNCA aggregation process. Protects neurons from staurosporine and 6-hydroxy dopamine (6OHDA)-stimulated caspase activation in a p53/TP53-dependent manner. Contributes to restore the SNCA anti-apoptotic function abolished by 6OHDA. Not found in the Lewy bodies associated with Parkinson disease. The sequence is that of Beta-synuclein (SNCB) from Homo sapiens (Human).